Reading from the N-terminus, the 121-residue chain is Protein SNORC (121 aa).

The first 24 residues, 1–24, serve as a signal peptide directing secretion; that stretch reads MASCLALRMALLLVSGVLAPAVLT. Residues 25 to 92 lie on the Extracellular side of the membrane; it reads DDVPQEPVPT…QGGGSLGPGA (68 aa). Positions 28–84 are disordered; sequence PQEPVPTLWNEPAELPSGEGPVESTSPGREPVDTGPPAPTVAPGPEDSTAQERLDQG. The chain crosses the membrane as a helical span at residues 93–113; the sequence is IAAIVIAALLATCVVLALVVV. At 114 to 121 the chain is on the cytoplasmic side; the sequence is ALRKFSAS.

Interacts (via the extracellular domain) with FGF2. Expressed in cartilage.

Its subcellular location is the membrane. The protein resides in the cytoplasm. The protein localises to the secreted. It is found in the extracellular space. It localises to the extracellular matrix. Functionally, plays a role in the regulation of chondrocyte maturation and postnatal endochondral ossification. May inhibit cell growth stimulation induced by FGF2. This is Protein SNORC from Homo sapiens (Human).